Consider the following 260-residue polypeptide: Hydroxyacylglutathione hydrolase (260 aa).

The Zn(2+) site is built by histidine 55, histidine 57, aspartate 59, histidine 60, histidine 116, aspartate 133, and histidine 171.

The protein belongs to the metallo-beta-lactamase superfamily. Glyoxalase II family. In terms of assembly, monomer. The cofactor is Zn(2+).

The catalysed reaction is an S-(2-hydroxyacyl)glutathione + H2O = a 2-hydroxy carboxylate + glutathione + H(+). It functions in the pathway secondary metabolite metabolism; methylglyoxal degradation; (R)-lactate from methylglyoxal: step 2/2. Thiolesterase that catalyzes the hydrolysis of S-D-lactoyl-glutathione to form glutathione and D-lactic acid. The protein is Hydroxyacylglutathione hydrolase of Shewanella loihica (strain ATCC BAA-1088 / PV-4).